The sequence spans 82 residues: Small ribosomal subunit protein bS16 (82 aa).

Belongs to the bacterial ribosomal protein bS16 family.

The protein is Small ribosomal subunit protein bS16 of Klebsiella pneumoniae (strain 342).